A 233-amino-acid polypeptide reads, in one-letter code: Gamma-glutamyl-hercynylcysteine sulfoxide hydrolase (233 aa).

Cysteine 2 acts as the Nucleophile in catalysis. Residues 2-233 enclose the Glutamine amidotransferase type-2 domain; sequence CRHLGWLGAQ…TALDRAKGPR (232 aa).

The enzyme catalyses gamma-L-glutamyl-hercynylcysteine S-oxide + H2O = S-(hercyn-2-yl)-L-cysteine S-oxide + L-glutamate. It participates in amino-acid biosynthesis; ergothioneine biosynthesis. Catalyzes the hydrolysis of the gamma-glutamyl amide bond of hercynyl-gamma-L-glutamyl-L-cysteine sulfoxide to produce hercynylcysteine sulfoxide, a step in the biosynthesis pathway of ergothioneine. ERG is one of the major redox buffers which protects bacteria against redox stressors and antibiotics; loss of ERG or mycothiol (MSH, the other major redox buffer in this bacteria) leads to respiratory alterations and bioenergetic deficiencies that negatively impact virulence. This Mycobacterium tuberculosis (strain CDC 1551 / Oshkosh) protein is Gamma-glutamyl-hercynylcysteine sulfoxide hydrolase.